Consider the following 114-residue polypeptide: Putative movement protein (114 aa).

Residues 27-47 (LIGIILLVTVCLIVLWVCIML) form a helical membrane-spanning segment. The segment at 79 to 114 (RTPFEATGPERERNWDARRQSTTVNPASQPNTGSVF) is disordered. Positions 86–97 (GPERERNWDARR) are enriched in basic and acidic residues. Over residues 98 to 114 (QSTTVNPASQPNTGSVF) the composition is skewed to polar residues.

This sequence belongs to the nanovirus movement protein family.

Its subcellular location is the host cell membrane. Functionally, may transport viral genome to neighboring plant cells directly through plasmosdesmata, without any budding. The movement protein allows efficient cell to cell propagation, by bypassing the host cell wall barrier. The protein is Putative movement protein (DNA-M) of Faba bean necrotic yellows virus (isolate Syrian SV292-88) (FBNYV).